Here is a 252-residue protein sequence, read N- to C-terminus: dITP/XTP pyrophosphatase (252 aa).

Residue Thr7–Lys12 coordinates substrate. Residue Asp74 is the Proton acceptor of the active site. Position 74 (Asp74) interacts with Mg(2+). Residues Ser75 and Phe193–Asp196 each bind substrate. The interval Asp202–Glu229 is disordered. Substrate contacts are provided by residues Lys230 and His235–Arg236.

It belongs to the HAM1 NTPase family. As to quaternary structure, homodimer. The cofactor is Mg(2+).

It carries out the reaction XTP + H2O = XMP + diphosphate + H(+). It catalyses the reaction dITP + H2O = dIMP + diphosphate + H(+). The catalysed reaction is ITP + H2O = IMP + diphosphate + H(+). In terms of biological role, pyrophosphatase that catalyzes the hydrolysis of nucleoside triphosphates to their monophosphate derivatives, with a high preference for the non-canonical purine nucleotides XTP (xanthosine triphosphate), dITP (deoxyinosine triphosphate) and ITP. Seems to function as a house-cleaning enzyme that removes non-canonical purine nucleotides from the nucleotide pool, thus preventing their incorporation into DNA/RNA and avoiding chromosomal lesions. The chain is dITP/XTP pyrophosphatase from Bifidobacterium longum (strain NCC 2705).